The chain runs to 239 residues: Ribosomal RNA small subunit methyltransferase G (239 aa).

Residues G77, F82, 128–129, and R147 contribute to the S-adenosyl-L-methionine site; that span reads AE. The tract at residues 219 to 239 is disordered; sequence KNTPKKYPRKPGTPNKSPIEG.

This sequence belongs to the methyltransferase superfamily. RNA methyltransferase RsmG family.

It is found in the cytoplasm. In terms of biological role, specifically methylates the N7 position of guanine in position 535 of 16S rRNA. This Bacillus subtilis (strain 168) protein is Ribosomal RNA small subunit methyltransferase G.